Consider the following 122-residue polypeptide: Large ribosomal subunit protein uL14 (122 aa).

Belongs to the universal ribosomal protein uL14 family. As to quaternary structure, part of the 50S ribosomal subunit. Forms a cluster with proteins L3 and L19. In the 70S ribosome, L14 and L19 interact and together make contacts with the 16S rRNA in bridges B5 and B8.

In terms of biological role, binds to 23S rRNA. Forms part of two intersubunit bridges in the 70S ribosome. The sequence is that of Large ribosomal subunit protein uL14 from Rhodopirellula baltica (strain DSM 10527 / NCIMB 13988 / SH1).